Reading from the N-terminus, the 278-residue chain is Nucleotide-binding protein LHK_02029 (278 aa).

Residue 8-15 (GLAGSGKS) participates in ATP binding. 57–60 (DTRD) contacts GTP.

It belongs to the RapZ-like family.

Functionally, displays ATPase and GTPase activities. This Laribacter hongkongensis (strain HLHK9) protein is Nucleotide-binding protein LHK_02029.